Reading from the N-terminus, the 206-residue chain is Large ribosomal subunit protein uL4 (206 aa).

Belongs to the universal ribosomal protein uL4 family. In terms of assembly, part of the 50S ribosomal subunit.

One of the primary rRNA binding proteins, this protein initially binds near the 5'-end of the 23S rRNA. It is important during the early stages of 50S assembly. It makes multiple contacts with different domains of the 23S rRNA in the assembled 50S subunit and ribosome. Its function is as follows. Forms part of the polypeptide exit tunnel. The chain is Large ribosomal subunit protein uL4 from Desulfatibacillum aliphaticivorans.